Consider the following 421-residue polypeptide: UDP-N-acetylglucosamine 1-carboxyvinyltransferase (421 aa).

Position 22–23 (22–23 (KN)) interacts with phosphoenolpyruvate. UDP-N-acetyl-alpha-D-glucosamine is bound at residue Arg94. The active-site Proton donor is Cys118. Cys118 bears the 2-(S-cysteinyl)pyruvic acid O-phosphothioketal mark. UDP-N-acetyl-alpha-D-glucosamine-binding positions include 163–166 (KVSV), Asp308, and Ile330.

Belongs to the EPSP synthase family. MurA subfamily.

It localises to the cytoplasm. The catalysed reaction is phosphoenolpyruvate + UDP-N-acetyl-alpha-D-glucosamine = UDP-N-acetyl-3-O-(1-carboxyvinyl)-alpha-D-glucosamine + phosphate. Its pathway is cell wall biogenesis; peptidoglycan biosynthesis. Functionally, cell wall formation. Adds enolpyruvyl to UDP-N-acetylglucosamine. The protein is UDP-N-acetylglucosamine 1-carboxyvinyltransferase of Orientia tsutsugamushi (strain Ikeda) (Rickettsia tsutsugamushi).